Reading from the N-terminus, the 858-residue chain is DNA mismatch repair protein MutS (858 aa).

Residue 618-625 (GPNMGGKS) participates in ATP binding.

The protein belongs to the DNA mismatch repair MutS family.

In terms of biological role, this protein is involved in the repair of mismatches in DNA. It is possible that it carries out the mismatch recognition step. This protein has a weak ATPase activity. The chain is DNA mismatch repair protein MutS from Shewanella woodyi (strain ATCC 51908 / MS32).